The primary structure comprises 416 residues: Serine hydroxymethyltransferase 1 (416 aa).

(6S)-5,6,7,8-tetrahydrofolate contacts are provided by residues L121 and G125 to L127. K229 is modified (N6-(pyridoxal phosphate)lysine). (6S)-5,6,7,8-tetrahydrofolate is bound by residues E245 and S354 to F356.

Belongs to the SHMT family. As to quaternary structure, homodimer. Pyridoxal 5'-phosphate serves as cofactor.

It is found in the cytoplasm. The enzyme catalyses (6R)-5,10-methylene-5,6,7,8-tetrahydrofolate + glycine + H2O = (6S)-5,6,7,8-tetrahydrofolate + L-serine. The protein operates within one-carbon metabolism; tetrahydrofolate interconversion. It participates in amino-acid biosynthesis; glycine biosynthesis; glycine from L-serine: step 1/1. Its function is as follows. Catalyzes the reversible interconversion of serine and glycine with tetrahydrofolate (THF) serving as the one-carbon carrier. This reaction serves as the major source of one-carbon groups required for the biosynthesis of purines, thymidylate, methionine, and other important biomolecules. Also exhibits THF-independent aldolase activity toward beta-hydroxyamino acids, producing glycine and aldehydes, via a retro-aldol mechanism. The polypeptide is Serine hydroxymethyltransferase 1 (Photobacterium profundum (strain SS9)).